The sequence spans 243 residues: Probable fructoselysine utilization operon transcriptional repressor (243 aa).

The 69-residue stretch at 10 to 78 (QLLYATVRQR…QGKGTFVQSQ (69 aa)) folds into the HTH gntR-type domain. A DNA-binding region (H-T-H motif) is located at residues 38–57 (ENELCTQYNVSRITIRKAIS).

It participates in carbohydrate metabolism; fructoselysine degradation [regulation]. May regulate the transcription of the frlABCDR operon, involved in the utilization of fructoselysine and psicoselysine. The protein is Probable fructoselysine utilization operon transcriptional repressor (frlR) of Shigella flexneri.